A 113-amino-acid polypeptide reads, in one-letter code: Iron-sulfur cluster insertion protein ErpA (113 aa).

Cys41, Cys105, and Cys107 together coordinate iron-sulfur cluster.

It belongs to the HesB/IscA family. As to quaternary structure, homodimer. Iron-sulfur cluster is required as a cofactor.

Required for insertion of 4Fe-4S clusters for at least IspG. This Actinobacillus pleuropneumoniae serotype 3 (strain JL03) protein is Iron-sulfur cluster insertion protein ErpA.